Reading from the N-terminus, the 447-residue chain is Phosphatidylinositol N-acetylglucosaminyltransferase subunit A (447 aa).

Topologically, residues 1 to 387 (MAEPPKLRVL…NRSLLERLMR (387 aa)) are cytoplasmic. Residues 388 to 408 (FLSCGAWAGKLFCMVMILDYL) traverse the membrane as a helical segment. Topologically, residues 409–447 (LWRLLQLLQPDEDIEEAPDICLCHHRGVEVSEGLRKKIK) are lumenal.

This sequence belongs to the glycosyltransferase group 1 family. Glycosyltransferase 4 subfamily. As to expression, expressed in roots, stems, leaves, flowers and pollen grains.

It is found in the endoplasmic reticulum membrane. It catalyses the reaction a 1,2-diacyl-sn-glycero-3-phospho-(1D-myo-inositol) + UDP-N-acetyl-alpha-D-glucosamine = a 6-(N-acetyl-alpha-D-glucosaminyl)-1-(1,2-diacyl-sn-glycero-3-phospho)-1D-myo-inositol + UDP + H(+). The protein operates within glycolipid biosynthesis; glycosylphosphatidylinositol-anchor biosynthesis. Necessary for the synthesis of N-acetylglucosaminyl-phosphatidylinositol, the very early intermediate in GPI-anchor biosynthesis. Required for pollen germination and pollen tube growth. This chain is Phosphatidylinositol N-acetylglucosaminyltransferase subunit A, found in Arabidopsis thaliana (Mouse-ear cress).